The sequence spans 61 residues: MHCLPVFVILLLLIASAPGVDVQPKTKNFMTRASLRDFAKKTPKRLSKLRGCCPRSFLCCR.

The N-terminal stretch at 1–19 is a signal peptide; it reads MHCLPVFVILLLLIASAPG. Positions 20 to 50 are excised as a propeptide; the sequence is VDVQPKTKNFMTRASLRDFAKKTPKRLSKLR.

This sequence belongs to the conotoxin T superfamily. Post-translationally, contains 2 disulfide bonds that can be either 'C1-C3, C2-C4' or 'C1-C4, C2-C3', since these disulfide connectivities have been observed for conotoxins with cysteine framework V (for examples, see AC P0DQQ7 and AC P81755). Expressed by the venom duct.

The protein resides in the secreted. The polypeptide is Conotoxin Vn5.3 (Conus ventricosus (Mediterranean cone)).